The following is a 277-amino-acid chain: MGIKVYKPTTNGRRNMTSLDFAEITTSTPEKSLLVSLKNKAGRNNNGRITVRHQGGGHKRHYRLIDFKRNKDGVEAVVKTIEYDPNRTANIALVHYTDGVKAYIIAPKGLEVGQRIVSGPDADIKIGNALPLANIPVGTVVHNIELKPGKGGELVRAAGASAQVLGQEGKYVLVRLQSGEVRMILGTCRATVGTVGNEQQSLVNIGKAGRSRWKGIRPTVRGSVMNPNDHPHGGGEGKAPVGRKAPSTPWGKPALGLKTRNKKAKSNKLIVRRRNEK.

The disordered stretch occupies residues 219–277; that stretch reads TVRGSVMNPNDHPHGGGEGKAPVGRKAPSTPWGKPALGLKTRNKKAKSNKLIVRRRNEK. The segment covering 259 to 277 has biased composition (basic residues); that stretch reads TRNKKAKSNKLIVRRRNEK.

This sequence belongs to the universal ribosomal protein uL2 family. In terms of assembly, part of the 50S ribosomal subunit. Forms a bridge to the 30S subunit in the 70S ribosome.

In terms of biological role, one of the primary rRNA binding proteins. Required for association of the 30S and 50S subunits to form the 70S ribosome, for tRNA binding and peptide bond formation. It has been suggested to have peptidyltransferase activity; this is somewhat controversial. Makes several contacts with the 16S rRNA in the 70S ribosome. This is Large ribosomal subunit protein uL2 from Streptococcus equi subsp. zooepidemicus (strain MGCS10565).